A 419-amino-acid chain; its full sequence is uncharacterized protein (419 aa).

11 helical membrane-spanning segments follow: residues 1–21 (MTTVSAIGALVALIVAIFLIL), 24–44 (VSPAYGMLVGALVGGLIGGAD), 66–86 (ILAAGVLAGVLIESGAANSIT), 101–121 (ALALATMILTAVGVFVDVAVI), 174–194 (SVMMAGIIPALFGLILTYFLA), 216–236 (NLPSFLTALVAPLVAILLLAL), 242–262 (IKVDPLIALPLGGLIGAFCMG), 280–300 (PVAIMLLGTGALAGIIANSGL), 311–331 (SGLPSYILAPISGVLMSLATA), 349–369 (LELGVSSLAGAAMIHAGATVF), and 396–416 (IPYESAVGLMMTIVSTLIFGV).

This sequence belongs to the CitM (TC 2.A.11) transporter family.

The protein localises to the cell membrane. This is an uncharacterized protein from Haemophilus influenzae (strain ATCC 51907 / DSM 11121 / KW20 / Rd).